The chain runs to 205 residues: Protein N-terminal glutamine amidohydrolase (205 aa).

Active-site residues include Cys-20, His-74, and Asp-90.

It belongs to the NTAQ1 family. Monomer.

The catalysed reaction is N-terminal L-glutaminyl-[protein] + H2O = N-terminal L-glutamyl-[protein] + NH4(+). Mediates the side-chain deamidation of N-terminal glutamine residues to glutamate, an important step in N-end rule pathway of protein degradation. Conversion of the resulting N-terminal glutamine to glutamate renders the protein susceptible to arginylation, polyubiquitination and degradation as specified by the N-end rule. Does not act on substrates with internal or C-terminal glutamine and does not act on non-glutamine residues in any position. This is Protein N-terminal glutamine amidohydrolase (tun) from Drosophila willistoni (Fruit fly).